We begin with the raw amino-acid sequence, 338 residues long: Taste receptor type 2 member 39 (338 aa).

Residues 1-30 are Extracellular-facing; the sequence is MLGRCFPPDTKEKQQLRMTKLCDPAESELS. Residues 31–51 traverse the membrane as a helical segment; that stretch reads PFLITLILAVLLAEYLIGIIA. At 52–74 the chain is on the cytoplasmic side; the sequence is NGFIMAIHAAEWVQNKAVSTSGR. The chain crosses the membrane as a helical span at residues 75–95; it reads ILVFLSVSRIALQSLMMLEIT. Residues 96–116 are Extracellular-facing; it reads ISSTSLSFYSEDAVYYAFKIS. The helical transmembrane segment at 117–137 threads the bilayer; it reads FIFLNFCSLWFAAWLSFFYFV. Over 138–156 the chain is Cytoplasmic; sequence KIANFSYPLFLKLRWRITG. A helical membrane pass occupies residues 157-177; the sequence is LIPWLLWLSVFISFSHSMFCI. Topologically, residues 178–205 are extracellular; that stretch reads NICTVYCNNSFPIHSSNSTKKTYLSEIN. 2 N-linked (GlcNAc...) asparagine glycosylation sites follow: Asn-185 and Asn-194. The chain crosses the membrane as a helical span at residues 206 to 226; the sequence is VVGLAFFFNLGIVTPLIMFIL. At 227 to 262 the chain is on the cytoplasmic side; that stretch reads TATLLILSLKRHTLHMGSNATGSNDPSMEAHMGAIK. A helical transmembrane segment spans residues 263–283; the sequence is AISYFLILYIFNAVALFIYLS. The Extracellular segment spans residues 284–291; it reads NMFDINSL. Residues 292-312 form a helical membrane-spanning segment; sequence WNNLCQIIMAAYPAGHSILPI. Topologically, residues 313 to 338 are cytoplasmic; it reads QDNPGLRRAWKRLQLRLHLYPKEWTL.

Belongs to the G-protein coupled receptor T2R family.

It is found in the membrane. Its function is as follows. Receptor that may play a role in the perception of bitterness and is gustducin-linked. May play a role in sensing the chemical composition of the gastrointestinal content. The activity of this receptor may stimulate alpha gustducin, mediate PLC-beta-2 activation and lead to the gating of TRPM5. The chain is Taste receptor type 2 member 39 (TAS2R39) from Pan paniscus (Pygmy chimpanzee).